We begin with the raw amino-acid sequence, 207 residues long: Ribosomal RNA large subunit methyltransferase E (207 aa).

Residues G51, W53, D69, D85, and D108 each coordinate S-adenosyl-L-methionine. K148 (proton acceptor) is an active-site residue.

This sequence belongs to the class I-like SAM-binding methyltransferase superfamily. RNA methyltransferase RlmE family.

The protein resides in the cytoplasm. The catalysed reaction is uridine(2552) in 23S rRNA + S-adenosyl-L-methionine = 2'-O-methyluridine(2552) in 23S rRNA + S-adenosyl-L-homocysteine + H(+). Functionally, specifically methylates the uridine in position 2552 of 23S rRNA at the 2'-O position of the ribose in the fully assembled 50S ribosomal subunit. In Methanospirillum hungatei JF-1 (strain ATCC 27890 / DSM 864 / NBRC 100397 / JF-1), this protein is Ribosomal RNA large subunit methyltransferase E.